Here is a 501-residue protein sequence, read N- to C-terminus: Myosin heavy chain, embryonic smooth muscle isoform (501 aa).

Residues 1 to 457 are a coiled coil; sequence REAREKETKA…TLKNRLRRGG (457 aa). Residues 1–501 are rodlike tail (S2 and LMM domains); it reads REAREKETKA…VNETQPPQSE (501 aa). Disordered stretches follow at residues 182 to 202, 221 to 254, and 397 to 501; these read YQRELEEARGSRDEIFAQSKE, LASSERARRHAEQERDELADEIANSASGKSALLD, and MEKA…PQSE. Residues 223-233 are compositionally biased toward basic and acidic residues; the sequence is SSERARRHAEQ. The span at 492 to 501 shows a compositional bias: polar residues; it reads VNETQPPQSE.

Muscle myosin is a hexameric protein that consists of 2 heavy chain subunits (MHC), 2 alkali light chain subunits (MLC) and 2 regulatory light chain subunits (MLC-2).

The protein resides in the cytoplasm. It is found in the myofibril. Its function is as follows. Muscle contraction. This Oryctolagus cuniculus (Rabbit) protein is Myosin heavy chain, embryonic smooth muscle isoform.